The chain runs to 369 residues: 3-isopropylmalate dehydrogenase (369 aa).

Residue 76–89 participates in NAD(+) binding; sequence GPKWDRNPSHLRPE. Arginine 96, arginine 106, arginine 134, and aspartate 223 together coordinate substrate. Mg(2+) contacts are provided by aspartate 223, aspartate 247, and aspartate 251. 281–293 provides a ligand contact to NAD(+); the sequence is GSAPDIAGQNKAN.

This sequence belongs to the isocitrate and isopropylmalate dehydrogenases family. LeuB type 1 subfamily. In terms of assembly, homodimer. Requires Mg(2+) as cofactor. Mn(2+) is required as a cofactor.

The protein resides in the cytoplasm. The enzyme catalyses (2R,3S)-3-isopropylmalate + NAD(+) = 4-methyl-2-oxopentanoate + CO2 + NADH. Its pathway is amino-acid biosynthesis; L-leucine biosynthesis; L-leucine from 3-methyl-2-oxobutanoate: step 3/4. Functionally, catalyzes the oxidation of 3-carboxy-2-hydroxy-4-methylpentanoate (3-isopropylmalate) to 3-carboxy-4-methyl-2-oxopentanoate. The product decarboxylates to 4-methyl-2 oxopentanoate. The polypeptide is 3-isopropylmalate dehydrogenase (leuB) (Priestia megaterium (strain DSM 319 / IMG 1521) (Bacillus megaterium)).